A 147-amino-acid chain; its full sequence is Deoxyuridine 5'-triphosphate nucleotidohydrolase (147 aa).

Arg-24 is a binding site for Mg(2+). Residues 68–70 (PRS), 82–85 (GVID), Tyr-88, Gly-93, Ile-95, and Arg-111 each bind dUTP.

The protein belongs to the dUTPase family. Requires Mg(2+) as cofactor.

It catalyses the reaction dUTP + H2O = dUMP + diphosphate + H(+). Its function is as follows. This enzyme is involved in nucleotide metabolism: it produces dUMP, the immediate precursor of thymidine nucleotides and it decreases the intracellular concentration of dUTP so that uracil cannot be incorporated into DNA. The polypeptide is Deoxyuridine 5'-triphosphate nucleotidohydrolase (OPG046) (Oryctolagus cuniculus (Rabbit)).